The primary structure comprises 339 residues: D-erythrose-4-phosphate dehydrogenase (339 aa).

NAD(+)-binding positions include 12 to 13 (RI) and Arg81. Substrate-binding positions include 154 to 156 (SCT), Arg200, 213 to 214 (TK), and Arg236. The Nucleophile role is filled by Cys155. Residue Asn318 coordinates NAD(+).

Belongs to the glyceraldehyde-3-phosphate dehydrogenase family. Epd subfamily. Homotetramer.

The protein resides in the cytoplasm. The enzyme catalyses D-erythrose 4-phosphate + NAD(+) + H2O = 4-phospho-D-erythronate + NADH + 2 H(+). Its pathway is cofactor biosynthesis; pyridoxine 5'-phosphate biosynthesis; pyridoxine 5'-phosphate from D-erythrose 4-phosphate: step 1/5. Catalyzes the NAD-dependent conversion of D-erythrose 4-phosphate to 4-phosphoerythronate. The chain is D-erythrose-4-phosphate dehydrogenase from Escherichia fergusonii (strain ATCC 35469 / DSM 13698 / CCUG 18766 / IAM 14443 / JCM 21226 / LMG 7866 / NBRC 102419 / NCTC 12128 / CDC 0568-73).